We begin with the raw amino-acid sequence, 372 residues long: 4-hydroxy-3-methylbut-2-en-1-yl diphosphate synthase (flavodoxin) (372 aa).

[4Fe-4S] cluster contacts are provided by cysteine 270, cysteine 273, cysteine 305, and glutamate 312.

The protein belongs to the IspG family. [4Fe-4S] cluster serves as cofactor.

It catalyses the reaction (2E)-4-hydroxy-3-methylbut-2-enyl diphosphate + oxidized [flavodoxin] + H2O + 2 H(+) = 2-C-methyl-D-erythritol 2,4-cyclic diphosphate + reduced [flavodoxin]. It participates in isoprenoid biosynthesis; isopentenyl diphosphate biosynthesis via DXP pathway; isopentenyl diphosphate from 1-deoxy-D-xylulose 5-phosphate: step 5/6. Converts 2C-methyl-D-erythritol 2,4-cyclodiphosphate (ME-2,4cPP) into 1-hydroxy-2-methyl-2-(E)-butenyl 4-diphosphate. The sequence is that of 4-hydroxy-3-methylbut-2-en-1-yl diphosphate synthase (flavodoxin) from Aliivibrio fischeri (strain ATCC 700601 / ES114) (Vibrio fischeri).